The chain runs to 143 residues: Large ribosomal subunit protein uL15 (143 aa).

The disordered stretch occupies residues 1-56; that stretch reads MELNSIKPAEGSKHAKRRVGRGIGSGLGKTAGRGHKGQKSRSGGYHKVGFEGGQMP. Residues 21–31 show a composition bias toward gly residues; the sequence is RGIGSGLGKTA.

This sequence belongs to the universal ribosomal protein uL15 family. As to quaternary structure, part of the 50S ribosomal subunit.

Its function is as follows. Binds to the 23S rRNA. This is Large ribosomal subunit protein uL15 from Delftia acidovorans (strain DSM 14801 / SPH-1).